Reading from the N-terminus, the 86-residue chain is Large ribosomal subunit protein bL27 (86 aa).

The disordered stretch occupies residues 1 to 21 (MAHKKGGGSSRNGRDSESKRL).

Belongs to the bacterial ribosomal protein bL27 family.

The protein is Large ribosomal subunit protein bL27 of Rubrobacter xylanophilus (strain DSM 9941 / JCM 11954 / NBRC 16129 / PRD-1).